Here is a 1105-residue protein sequence, read N- to C-terminus: uncharacterized protein (1105 aa).

This sequence belongs to the mycobacterial PPE family.

This is an uncharacterized protein from Mycobacterium tuberculosis (strain CDC 1551 / Oshkosh).